The primary structure comprises 242 residues: tRNA pseudouridine synthase A (242 aa).

The Nucleophile role is filled by aspartate 51. Position 107 (tyrosine 107) interacts with substrate.

The protein belongs to the tRNA pseudouridine synthase TruA family. As to quaternary structure, homodimer.

The catalysed reaction is uridine(38/39/40) in tRNA = pseudouridine(38/39/40) in tRNA. In terms of biological role, formation of pseudouridine at positions 38, 39 and 40 in the anticodon stem and loop of transfer RNAs. The chain is tRNA pseudouridine synthase A from Helicobacter pylori (strain G27).